Here is a 416-residue protein sequence, read N- to C-terminus: Gamma-glutamyl phosphate reductase (416 aa).

It belongs to the gamma-glutamyl phosphate reductase family.

It localises to the cytoplasm. The enzyme catalyses L-glutamate 5-semialdehyde + phosphate + NADP(+) = L-glutamyl 5-phosphate + NADPH + H(+). It functions in the pathway amino-acid biosynthesis; L-proline biosynthesis; L-glutamate 5-semialdehyde from L-glutamate: step 2/2. In terms of biological role, catalyzes the NADPH-dependent reduction of L-glutamate 5-phosphate into L-glutamate 5-semialdehyde and phosphate. The product spontaneously undergoes cyclization to form 1-pyrroline-5-carboxylate. This chain is Gamma-glutamyl phosphate reductase, found in Streptococcus pyogenes serotype M4 (strain MGAS10750).